The sequence spans 62 residues: Large ribosomal subunit protein uL29 (62 aa).

This sequence belongs to the universal ribosomal protein uL29 family.

The protein is Large ribosomal subunit protein uL29 of Chromobacterium violaceum (strain ATCC 12472 / DSM 30191 / JCM 1249 / CCUG 213 / NBRC 12614 / NCIMB 9131 / NCTC 9757 / MK).